The following is a 702-amino-acid chain: Elongation factor G (702 aa).

One can recognise a tr-type G domain in the interval 8–290 (ERYRNIGISA…AVIDYLPSPV (283 aa)). GTP contacts are provided by residues 17 to 24 (AHIDAGKT), 88 to 92 (DTPGH), and 142 to 145 (NKMD).

Belongs to the TRAFAC class translation factor GTPase superfamily. Classic translation factor GTPase family. EF-G/EF-2 subfamily.

It localises to the cytoplasm. In terms of biological role, catalyzes the GTP-dependent ribosomal translocation step during translation elongation. During this step, the ribosome changes from the pre-translocational (PRE) to the post-translocational (POST) state as the newly formed A-site-bound peptidyl-tRNA and P-site-bound deacylated tRNA move to the P and E sites, respectively. Catalyzes the coordinated movement of the two tRNA molecules, the mRNA and conformational changes in the ribosome. The chain is Elongation factor G from Acidovorax sp. (strain JS42).